We begin with the raw amino-acid sequence, 70 residues long: DNA-directed RNA polymerase subunit omega (70 aa).

It belongs to the RNA polymerase subunit omega family. The RNAP catalytic core consists of 2 alpha, 1 beta, 1 beta' and 1 omega subunit. When a sigma factor is associated with the core the holoenzyme is formed, which can initiate transcription.

The catalysed reaction is RNA(n) + a ribonucleoside 5'-triphosphate = RNA(n+1) + diphosphate. Its function is as follows. Promotes RNA polymerase assembly. Latches the N- and C-terminal regions of the beta' subunit thereby facilitating its interaction with the beta and alpha subunits. This chain is DNA-directed RNA polymerase subunit omega, found in Thermoanaerobacter sp. (strain X514).